Consider the following 161-residue polypeptide: Small ribosomal subunit protein uS9 (161 aa).

The protein belongs to the universal ribosomal protein uS9 family.

In Bartonella henselae (strain ATCC 49882 / DSM 28221 / CCUG 30454 / Houston 1) (Rochalimaea henselae), this protein is Small ribosomal subunit protein uS9.